Reading from the N-terminus, the 553-residue chain is MKQRLIVKTALSAAILATLAGCATQPTQEWAADTTYKLTVLHTNDHHGRFWQNKYGEYGMAARKTLIDELRAEIQAEGGSVLLLSGGDINTGVPESDLQDAEPDFKGMSKIGYDAMALGNHEFDNPLDVLMKQKEWANFPMLSANIYDKKTGERMFQAYEMFDKQGIKIAVIGLTTEDTAKLGNPEFIGAIDFRDPKEEAKKLIAELKETEKPDLIFAVTHMGHYEDGKRGINAPGDVALARYLNEGDLDMIVGGHSQEPVCMEAPNVVKKNFKPADECKPDQQNGTYIVQAHEWGKYVGRADYEFRNGELRMVSYDLIPVNLKKKVEVDGKSQRVFIESEIKEDTALLEFLRPYQEKGQEQLNVKIADTNGKLEGDRNVVRFQQTNLGRLIAVSHMERAKADFAVMNSGGVRDSIEAGEVTYKDVLTVQPFANILTYTDMTGKEVLDYLNVVATKPVDSGAYAQFAGISMTVANGKVSNVFIGGKQLRLDETYRFTVPSYNAAGGDGYPKLTGHPGYVNTGFVDAEVLKEFLEKNSPIDVNKFAPNGEIVYK.

The N-terminal stretch at 1–21 is a signal peptide; sequence MKQRLIVKTALSAAILATLAG. Residue cysteine 22 is the site of N-palmitoyl cysteine attachment. Cysteine 22 carries the S-diacylglycerol cysteine lipid modification. Aspartate 45, histidine 47, aspartate 88, asparagine 120, histidine 221, histidine 256, and glutamine 258 together coordinate a divalent metal cation. Substrate-binding positions include phenylalanine 432 and 501-507; that span reads YNAAGGD.

The protein belongs to the 5'-nucleotidase family. It depends on chloride as a cofactor. Requires Mg(2+) as cofactor.

The protein resides in the cell outer membrane. It catalyses the reaction a ribonucleoside 5'-phosphate + H2O = a ribonucleoside + phosphate. Its function is as follows. Degradation of extracellular 5'-nucleotides for nutritional needs. This is 5'-nucleotidase (nutA) from Vibrio vulnificus (strain CMCP6).